A 352-amino-acid polypeptide reads, in one-letter code: Isoflavone-7-O-methyltransferase 8 (352 aa).

118-127 (VLDPTLSGSY) contributes to the substrate binding site. S-adenosyl-L-methionine is bound by residues glycine 196, aspartate 219, aspartate 239, methionine 240, and lysine 253. Histidine 257 acts as the Proton acceptor in catalysis.

Belongs to the class I-like SAM-binding methyltransferase superfamily. Cation-independent O-methyltransferase family. COMT subfamily. In terms of assembly, homodimer.

It catalyses the reaction a 7-hydroxyisoflavone + S-adenosyl-L-methionine = a 7-methoxyisoflavone + S-adenosyl-L-homocysteine + H(+). It functions in the pathway phytoalexin biosynthesis; medicarpin biosynthesis. Transfers a methyl group to 7-hydroxyls of the isoflavones daidzein, genistein and 6,7,4'-trihydroxyisoflavone. Can also methylate (+)6a-hydroxymaackiain with lower efficiency. In Medicago sativa (Alfalfa), this protein is Isoflavone-7-O-methyltransferase 8.